Reading from the N-terminus, the 185-residue chain is Imidazoleglycerol-phosphate dehydratase (185 aa).

Belongs to the imidazoleglycerol-phosphate dehydratase family.

Its subcellular location is the cytoplasm. The catalysed reaction is D-erythro-1-(imidazol-4-yl)glycerol 3-phosphate = 3-(imidazol-4-yl)-2-oxopropyl phosphate + H2O. It participates in amino-acid biosynthesis; L-histidine biosynthesis; L-histidine from 5-phospho-alpha-D-ribose 1-diphosphate: step 6/9. The chain is Imidazoleglycerol-phosphate dehydratase from Pyrobaculum arsenaticum (strain DSM 13514 / JCM 11321 / PZ6).